We begin with the raw amino-acid sequence, 149 residues long: Transcriptional repressor NrdR (149 aa).

A zinc finger spans residues 3-34 (CPFCSHPETQVVETRVAEDGDFVRRRRQCGAC). The ATP-cone domain occupies 49-139 (PNVVKKDGRR…VYRNFEDIDE (91 aa)).

This sequence belongs to the NrdR family. Zn(2+) is required as a cofactor.

Functionally, negatively regulates transcription of bacterial ribonucleotide reductase nrd genes and operons by binding to NrdR-boxes. The polypeptide is Transcriptional repressor NrdR (Paracidovorax citrulli (strain AAC00-1) (Acidovorax citrulli)).